Consider the following 743-residue polypeptide: Coiled-coil domain-containing protein 30 (743 aa).

Basic and acidic residues-rich tracts occupy residues 1–22 and 133–193; these read MSQE…REKQ and SPKE…MKPE. Disordered stretches follow at residues 1-25, 114-193, 208-233, and 695-715; these read MSQE…QLAS, ENIC…MKPE, SLLQ…GDKL, and SKEA…LVCS. Coiled-coil stretches lie at residues 21 to 98 and 165 to 580; these read KQLA…QLNH and REGQ…LIHS. Positions 208-223 are enriched in low complexity; the sequence is SLLQSQSSGDSSDDSG.

It belongs to the prefoldin subunit beta family.

The chain is Coiled-coil domain-containing protein 30 (CCDC30) from Macaca fascicularis (Crab-eating macaque).